The following is a 372-amino-acid chain: N-methyl-L-tryptophan oxidase (372 aa).

4-34 (DLIIIGSGSVGAAAGYYATRAGLKVLMTDAH) contributes to the FAD binding site. At cysteine 307 the chain carries S-8alpha-FAD cysteine.

Belongs to the MSOX/MTOX family. MTOX subfamily. As to quaternary structure, monomer. FAD is required as a cofactor.

The enzyme catalyses N(alpha)-methyl-L-tryptophan + O2 + H2O = L-tryptophan + formaldehyde + H2O2. In terms of biological role, catalyzes the oxidative demethylation of N-methyl-L-tryptophan. The sequence is that of N-methyl-L-tryptophan oxidase from Citrobacter koseri (strain ATCC BAA-895 / CDC 4225-83 / SGSC4696).